The chain runs to 742 residues: MEHIYQYAWIIPFLPLPVPLLIGAGLLFFPTATKNLRRIWAFSSISLLSIVMIFSMKLAIQQINSNSIYQYLWSWTINNDFSLEFGYLMDPLTSIMSMLITTVAILVLIYSDNYMSHDQGYLRFFAYMSFFNTSMLGLVTSSNLIQIYIFWELVGMCSYLLIGFWFTRPIAANACQKAFVTNRVGDFGLLLGILGLYWITGSFEFRDLFEIFNNLIKNNEVNSLFCILCAFLLFAGAVAKSAQFPLHVWLPDAMEGPTPISALIHAATMVAAGIFLVARLLPLFVVIPYIMYVISFIGIITVLLGATLALAQKDIKRSLAYYTMSQLGYMMLALGMGSYRTALFHLITHAYSKALLFLASGSLIHSMGTIVGYSPDKSQNMVLMGGLTKHVPITKTSFLIGTLSLCGIPPLACFWSKDEILNDSWVYSPIFAIIAYFTAGLTAFYMFRIYLLTFEGHLNFFCKNYSGKKSSSFYSISLWGKKELKTINQKISLLNLLTMNNKERASFFSKKPYEINVKLTKLLRSFITITYFENKNISLYPYESDNTMLFPLIILIMFTLFVGFIGIPFNQEGMDLDILTKWLTPSINLLHSNSENFVDWYEFVINAIFSISIAFFGIFIAFFFYKPIYSSLKNFDLINSFDKRGQKRILGDNIITIIYNWSANRGYIDAFYSTFLIKGIRSLSELVSFFDRRIIDGIPNGFGVTSFFVGEGIKYVGGGRISSYLFWYLLYVSIFLFIFTFT.

16 helical membrane passes run tryptophan 9–phenylalanine 29, isoleucine 39–alanine 59, proline 91–serine 111, phenylalanine 125–isoleucine 145, isoleucine 147–threonine 167, glycine 185–phenylalanine 205, leucine 224–phenylalanine 244, threonine 258–alanine 278, leucine 280–isoleucine 300, leucine 327–isoleucine 347, alanine 354–serine 374, threonine 396–serine 416, tryptophan 425–tyrosine 445, leucine 549–phenylalanine 569, phenylalanine 603–phenylalanine 623, and isoleucine 721–phenylalanine 741.

It belongs to the complex I subunit 5 family. As to quaternary structure, NDH is composed of at least 16 different subunits, 5 of which are encoded in the nucleus.

The protein resides in the plastid. It is found in the chloroplast thylakoid membrane. The enzyme catalyses a plastoquinone + NADH + (n+1) H(+)(in) = a plastoquinol + NAD(+) + n H(+)(out). It catalyses the reaction a plastoquinone + NADPH + (n+1) H(+)(in) = a plastoquinol + NADP(+) + n H(+)(out). NDH shuttles electrons from NAD(P)H:plastoquinone, via FMN and iron-sulfur (Fe-S) centers, to quinones in the photosynthetic chain and possibly in a chloroplast respiratory chain. The immediate electron acceptor for the enzyme in this species is believed to be plastoquinone. Couples the redox reaction to proton translocation, and thus conserves the redox energy in a proton gradient. The chain is NAD(P)H-quinone oxidoreductase subunit 5, chloroplastic (ndhF) from Spinacia oleracea (Spinach).